The chain runs to 367 residues: MSISSKIRPTPRXPSRMATDHSFKMKNFYADPFAISSISLAIVSWVIAIGGSISSASTNESFPRFTWWGIVYQFLIICSLMLFYCFDLVDHYRIFITTSIAVAFVYNTNSATNLVYADGPKKAAASAGVILLSIINLIWILYYGGDNASPTNRWIDSFSIKGIRPSPLENSLHRARRRGNRNTTPYQNNVYNDAIRDSGYATQFDGYPQQQPSHTNYVSSTALAGFENTQPNTSEAVNLHLNXLQQRINSASNAKETNDNSNNQTNTNIGNTFDTDFSNGNTETTMGDTLGLYSDIGDDNFIYKAKALYPYDADDDDAYEISFEQNEILQVSDIEGRWWKARRANGETGIIPSNYVQLIDGPEEMHR.

Topologically, residues 1 to 32 (MSISSKIRPTPRXPSRMATDHSFKMKNFYADP) are cytoplasmic. A helical transmembrane segment spans residues 33 to 53 (FAISSISLAIVSWVIAIGGSI). Residues 54 to 65 (SSASTNESFPRF) lie on the Extracellular side of the membrane. N-linked (GlcNAc...) asparagine glycosylation is present at Asn-59. The helical transmembrane segment at 66 to 86 (TWWGIVYQFLIICSLMLFYCF) threads the bilayer. At 87–93 (DLVDHYR) the chain is on the cytoplasmic side. The helical transmembrane segment at 94 to 114 (IFITTSIAVAFVYNTNSATNL) threads the bilayer. The Extracellular segment spans residues 115–122 (VYADGPKK). The chain crosses the membrane as a helical span at residues 123 to 143 (AAASAGVILLSIINLIWILYY). Residues 144 to 367 (GGDNASPTNR…LIDGPEEMHR (224 aa)) are Cytoplasmic-facing. Ser-166 bears the Phosphoserine mark. The disordered stretch occupies residues 252–276 (SNAKETNDNSNNQTNTNIGNTFDTD). A compositionally biased stretch (low complexity) spans 259 to 272 (DNSNNQTNTNIGNT). The region spanning 300 to 361 (NFIYKAKALY…PSNYVQLIDG (62 aa)) is the SH3 domain.

The protein belongs to the SHO1 family. In terms of assembly, forms homooligomers. Interacts (via the SH3 domain) with PBS2. Interacts with FUS1, STE11, STE50 and RNA polymerase II.

The protein resides in the cell membrane. The protein localises to the bud. It localises to the bud neck. Its subcellular location is the cell projection. In terms of biological role, plasma membrane osmosensor that activates the high osmolarity glycerol (HOG) MAPK signaling pathway in response to high osmolarity. Detects changes in external osmolarity and activates PBS2 through the stimulation of STE11 and targets PBS2 to the plasma membrane. PBS2 activation leads to changes in glycerol production that helps to balance the intracellular and external osmotic pressures. Activates also HOG1 in response to heat stress and mediates resistance to oxidative stress. Involved in the regulation of the mating pathway. May be a receptor that feeds into the pseudohyphal growth pathway. This is High osmolarity signaling protein SHO1 (SHO1) from Saccharomyces cerevisiae (strain FostersB) (Baker's yeast).